We begin with the raw amino-acid sequence, 400 residues long: CCA-adding enzyme (400 aa).

ATP-binding residues include Gly-28 and Arg-31. Residues Gly-28 and Arg-31 each contribute to the CTP site. The Mg(2+) site is built by Asp-41 and Asp-43. Positions 112, 155, 158, 161, and 164 each coordinate ATP. Residues Arg-112, Asp-155, Arg-158, Arg-161, and Arg-164 each contribute to the CTP site.

The protein belongs to the tRNA nucleotidyltransferase/poly(A) polymerase family. Bacterial CCA-adding enzyme type 3 subfamily. As to quaternary structure, homodimer. Mg(2+) serves as cofactor.

It catalyses the reaction a tRNA precursor + 2 CTP + ATP = a tRNA with a 3' CCA end + 3 diphosphate. The catalysed reaction is a tRNA with a 3' CCA end + 2 CTP + ATP = a tRNA with a 3' CCACCA end + 3 diphosphate. Its function is as follows. Catalyzes the addition and repair of the essential 3'-terminal CCA sequence in tRNAs without using a nucleic acid template. Adds these three nucleotides in the order of C, C, and A to the tRNA nucleotide-73, using CTP and ATP as substrates and producing inorganic pyrophosphate. tRNA 3'-terminal CCA addition is required both for tRNA processing and repair. Also involved in tRNA surveillance by mediating tandem CCA addition to generate a CCACCA at the 3' terminus of unstable tRNAs. While stable tRNAs receive only 3'-terminal CCA, unstable tRNAs are marked with CCACCA and rapidly degraded. This is CCA-adding enzyme from Staphylococcus aureus (strain Mu3 / ATCC 700698).